Here is a 212-residue protein sequence, read N- to C-terminus: Thymidylate kinase (212 aa).

An ATP-binding site is contributed by 10-17 (GLEGAGKT).

The protein belongs to the thymidylate kinase family.

It catalyses the reaction dTMP + ATP = dTDP + ADP. Functionally, phosphorylation of dTMP to form dTDP in both de novo and salvage pathways of dTTP synthesis. The protein is Thymidylate kinase of Cronobacter sakazakii (strain ATCC BAA-894) (Enterobacter sakazakii).